We begin with the raw amino-acid sequence, 248 residues long: Proteasome subunit alpha (248 aa).

This sequence belongs to the peptidase T1A family. The 20S proteasome core is composed of 14 alpha and 14 beta subunits that assemble into four stacked heptameric rings, resulting in a barrel-shaped structure. The two inner rings, each composed of seven catalytic beta subunits, are sandwiched by two outer rings, each composed of seven alpha subunits. The catalytic chamber with the active sites is on the inside of the barrel. Has a gated structure, the ends of the cylinder being occluded by the N-termini of the alpha-subunits. Is capped at one or both ends by the proteasome regulatory ATPase, PAN.

It is found in the cytoplasm. Its activity is regulated as follows. The formation of the proteasomal ATPase PAN-20S proteasome complex, via the docking of the C-termini of PAN into the intersubunit pockets in the alpha-rings, triggers opening of the gate for substrate entry. Interconversion between the open-gate and close-gate conformations leads to a dynamic regulation of the 20S proteasome proteolysis activity. Component of the proteasome core, a large protease complex with broad specificity involved in protein degradation. The polypeptide is Proteasome subunit alpha (Methanothermobacter thermautotrophicus (strain ATCC 29096 / DSM 1053 / JCM 10044 / NBRC 100330 / Delta H) (Methanobacterium thermoautotrophicum)).